Reading from the N-terminus, the 313-residue chain is D-alanine--D-alanine ligase (313 aa).

In terms of domain architecture, ATP-grasp spans 108–308 (KLVWQQLGIP…YQELVVKVLA (201 aa)). Position 138–193 (138–193 (VAKLGLPLFVKPASEGSSVAVIKVKTADALVPALEEAVKFDKIVVVEKSIEGGGEY)) interacts with ATP. The Mg(2+) site is built by Asp-262, Glu-275, and Asn-277.

Belongs to the D-alanine--D-alanine ligase family. Mg(2+) serves as cofactor. Mn(2+) is required as a cofactor.

The protein localises to the cytoplasm. It carries out the reaction 2 D-alanine + ATP = D-alanyl-D-alanine + ADP + phosphate + H(+). The protein operates within cell wall biogenesis; peptidoglycan biosynthesis. In terms of biological role, cell wall formation. This chain is D-alanine--D-alanine ligase, found in Paraburkholderia phymatum (strain DSM 17167 / CIP 108236 / LMG 21445 / STM815) (Burkholderia phymatum).